The chain runs to 413 residues: Probable Xaa-Pro aminopeptidase UREG_07123 (413 aa).

Residues aspartate 194, aspartate 205, glutamate 340, and glutamate 379 each contribute to the Mn(2+) site.

It belongs to the peptidase M24B family. Requires Mn(2+) as cofactor.

It catalyses the reaction Release of any N-terminal amino acid, including proline, that is linked to proline, even from a dipeptide or tripeptide.. Catalyzes the removal of a penultimate prolyl residue from the N-termini of peptides. This chain is Probable Xaa-Pro aminopeptidase UREG_07123, found in Uncinocarpus reesii (strain UAMH 1704).